The chain runs to 183 residues: Capsid protein (183 aa).

A disordered region spans residues 143–183; the sequence is LPENAVVRRRGRSPRRRTPSPRRRRSQSPRRRRSQSRGSQC. The segment covering 149 to 177 has biased composition (basic residues); the sequence is VRRRGRSPRRRTPSPRRRRSQSPRRRRSQ. Residues S155, S162, and S170 each carry the phosphoserine; by host modification. The 1; half-length repeat unit spans residues 155 to 161; that stretch reads SPRRRTP. Residues 155–177 form a 3 X 8 AA repeats of S-P-R-R-R-[PR]-S-Q region; sequence SPRRRTPSPRRRRSQSPRRRRSQ. Residues 158–175 carry the Bipartite nuclear localization signal motif; sequence RRTPSPRRRRSQSPRRRR. 2 tandem repeats follow at residues 162 to 169 and 170 to 177. An RNA binding region spans residues 177–183; that stretch reads QSRGSQC.

This sequence belongs to the orthohepadnavirus core antigen family. In terms of assembly, homodimerizes, then multimerizes. Interacts with cytosol exposed regions of viral L glycoprotein present in the reticulum-to-Golgi compartment. Interacts with human FLNB. Phosphorylated form interacts with host importin alpha; this interaction depends on the exposure of the NLS, which itself depends upon genome maturation and/or phosphorylation of the capsid protein. Interacts with host NUP153. Post-translationally, phosphorylated by host SRPK1, SRPK2, and maybe protein kinase C or GAPDH. Phosphorylation is critical for pregenomic RNA packaging. Protein kinase C phosphorylation is stimulated by HBx protein and may play a role in transport of the viral genome to the nucleus at the late step during the viral replication cycle.

It localises to the virion. Its subcellular location is the host cytoplasm. Its function is as follows. Self assembles to form an icosahedral capsid. Most capsids appear to be large particles with an icosahedral symmetry of T=4 and consist of 240 copies of capsid protein, though a fraction forms smaller T=3 particles consisting of 180 capsid proteins. Entering capsids are transported along microtubules to the nucleus. Phosphorylation of the capsid is thought to induce exposure of nuclear localization signal in the C-terminal portion of the capsid protein that allows binding to the nuclear pore complex via the importin (karyopherin-) alpha and beta. Capsids are imported in intact form through the nuclear pore into the nuclear basket, where it probably binds NUP153. Only capsids that contain the mature viral genome can release the viral DNA and capsid protein into the nucleoplasm. Immature capsids get stuck in the basket. Capsids encapsulate the pre-genomic RNA and the P protein. Pre-genomic RNA is reverse-transcribed into DNA while the capsid is still in the cytoplasm. The capsid can then either be directed to the nucleus, providing more genomes for transcription, or bud through the endoplasmic reticulum to provide new virions. The sequence is that of Capsid protein from Homo sapiens (Human).